We begin with the raw amino-acid sequence, 507 residues long: Arabinose import ATP-binding protein AraG (507 aa).

2 ABC transporter domains span residues 8–243 (LSFH…MVGR) and 255–499 (PHGE…MLRI). Position 40–47 (40–47 (GENGAGKS)) interacts with ATP.

It belongs to the ABC transporter superfamily. Arabinose importer (TC 3.A.1.2.2) family. The complex is composed of two ATP-binding proteins (AraG), two transmembrane proteins (AraH) and a solute-binding protein (AraF).

Its subcellular location is the cell inner membrane. The catalysed reaction is L-arabinose(out) + ATP + H2O = L-arabinose(in) + ADP + phosphate + H(+). Functionally, part of the ABC transporter complex AraFGH involved in arabinose import. Responsible for energy coupling to the transport system. The chain is Arabinose import ATP-binding protein AraG from Pectobacterium atrosepticum (strain SCRI 1043 / ATCC BAA-672) (Erwinia carotovora subsp. atroseptica).